The chain runs to 95 residues: uncharacterized protein (95 aa).

The disordered stretch occupies residues 65-95 (DANDYDTTTTEEEDSSTTTTTDNETNSDDDI).

This is an uncharacterized protein from Lymantria dispar multicapsid nuclear polyhedrosis virus (LdMNPV).